The chain runs to 706 residues: Elongation factor G 1 (706 aa).

In terms of domain architecture, tr-type G spans 8-290; the sequence is NRYRNIGICA…AVIDYLPAPT (283 aa). GTP-binding positions include 17–24, 88–92, and 142–145; these read AHVDAGKT, DTPGH, and NKMD.

It belongs to the TRAFAC class translation factor GTPase superfamily. Classic translation factor GTPase family. EF-G/EF-2 subfamily.

The protein localises to the cytoplasm. Functionally, catalyzes the GTP-dependent ribosomal translocation step during translation elongation. During this step, the ribosome changes from the pre-translocational (PRE) to the post-translocational (POST) state as the newly formed A-site-bound peptidyl-tRNA and P-site-bound deacylated tRNA move to the P and E sites, respectively. Catalyzes the coordinated movement of the two tRNA molecules, the mRNA and conformational changes in the ribosome. The chain is Elongation factor G 1 from Pseudomonas aeruginosa (strain ATCC 15692 / DSM 22644 / CIP 104116 / JCM 14847 / LMG 12228 / 1C / PRS 101 / PAO1).